A 941-amino-acid polypeptide reads, in one-letter code: Bifunctional glutamine synthetase adenylyltransferase/adenylyl-removing enzyme (941 aa).

Residues 1 to 431 (MSSAPPFAAA…TFRNAFRLAG (431 aa)) form an adenylyl removase region. Positions 447–941 (NGHGMRPHAG…DGTIAQAEVK (495 aa)) are adenylyl transferase.

This sequence belongs to the GlnE family. Mg(2+) is required as a cofactor.

The enzyme catalyses [glutamine synthetase]-O(4)-(5'-adenylyl)-L-tyrosine + phosphate = [glutamine synthetase]-L-tyrosine + ADP. It carries out the reaction [glutamine synthetase]-L-tyrosine + ATP = [glutamine synthetase]-O(4)-(5'-adenylyl)-L-tyrosine + diphosphate. Involved in the regulation of glutamine synthetase GlnA, a key enzyme in the process to assimilate ammonia. When cellular nitrogen levels are high, the C-terminal adenylyl transferase (AT) inactivates GlnA by covalent transfer of an adenylyl group from ATP to specific tyrosine residue of GlnA, thus reducing its activity. Conversely, when nitrogen levels are low, the N-terminal adenylyl removase (AR) activates GlnA by removing the adenylyl group by phosphorolysis, increasing its activity. The regulatory region of GlnE binds the signal transduction protein PII (GlnB) which indicates the nitrogen status of the cell. In Bordetella bronchiseptica (strain ATCC BAA-588 / NCTC 13252 / RB50) (Alcaligenes bronchisepticus), this protein is Bifunctional glutamine synthetase adenylyltransferase/adenylyl-removing enzyme.